A 1035-amino-acid polypeptide reads, in one-letter code: Condensin complex subunit 3 (1035 aa).

HEAT repeat units follow at residues 113–150 and 153–191; these read RFVD…NIGE and ESLF…EEQT. Serine 198 bears the Phosphoserine mark. An HEAT 3 repeat occupies 201–239; that stretch reads EENFEATRTLVASIQNDPSAEVRRAAMLNLINDNNTRPY. The segment at 500–536 is disordered; sequence EEKIKSKKINRRNETSVDEEDENGTHNDEVNEDEEDD. 2 HEAT repeats span residues 597–635 and 827–864; these read ILIA…LDVK and VQLT…SSEQ. The segment covering 909–919 has biased composition (basic and acidic residues); the sequence is ERSETQTKDEN. Disordered stretches follow at residues 909–934 and 959–995; these read ERSE…GNSF and TTVN…LENM. 2 stretches are compositionally biased toward polar residues: residues 920–934 and 959–973; these read NTAN…GNSF and TTVN…TEQS. Residue serine 933 is modified to Phosphoserine. Phosphoserine is present on serine 981. Residues 986 to 995 are compositionally biased toward polar residues; it reads IDTSKNLENM. Serine 1008 is modified (phosphoserine). Positions 1012-1035 are disordered; sequence PDEKSDAMSIDEEDKDSESFSEVC.

This sequence belongs to the CND3 (condensin subunit 3) family. In terms of assembly, component of the condensin complex, which contains the SMC2 and SMC4 heterodimer, and three non SMC subunits that probably regulate the complex: BRN1, YCS4 and YCG1/YCS5.

Its subcellular location is the nucleus. It localises to the cytoplasm. It is found in the chromosome. In terms of biological role, regulatory subunit of the condensin complex, a complex required for conversion of interphase chromatin into mitotic-like condense chromosomes. The condensin complex probably introduces positive supercoils into relaxed DNA in the presence of type I topoisomerases and converts nicked DNA into positive knotted forms in the presence of type II topoisomerases. The condensin complex probably also plays a role during interphase. In Saccharomyces cerevisiae (strain ATCC 204508 / S288c) (Baker's yeast), this protein is Condensin complex subunit 3 (YCG1).